We begin with the raw amino-acid sequence, 704 residues long: CAP-Gly domain-containing linker protein 4 (704 aa).

ANK repeat units follow at residues threonine 65–aspartate 101, threonine 149–alanine 180, and asparagine 186–phenylalanine 215. The region spanning glycine 303–proline 345 is the CAP-Gly 1 domain. A disordered region spans residues lysine 353–histidine 479. Low complexity-rich tracts occupy residues threonine 360–alanine 371, serine 423–serine 432, and proline 440–serine 461. One can recognise a CAP-Gly 2 domain in the interval glycine 504–proline 546. Phosphoserine occurs at positions 556 and 608. Positions glycine 643 to arginine 685 constitute a CAP-Gly 3 domain.

In Mus musculus (Mouse), this protein is CAP-Gly domain-containing linker protein 4 (Clip4).